The sequence spans 1088 residues: RNA-directed RNA polymerase (1088 aa).

A RdRp catalytic domain is found at 501-687; the sequence is LSYGDVTRFL…AKRYIAGGKI (187 aa).

This sequence belongs to the reoviridae RNA-directed RNA polymerase family. As to quaternary structure, interacts with VP3 (Potential). Interacts with VP2; this interaction activates VP1. Interacts with NSP5; this interaction is probably necessary for the formation of functional virus factories. Interacts with NSP2; this interaction is weak. Requires Mg(2+) as cofactor.

It localises to the virion. The enzyme catalyses RNA(n) + a ribonucleoside 5'-triphosphate = RNA(n+1) + diphosphate. In terms of biological role, RNA-directed RNA polymerase that is involved in both transcription and genome replication. Together with VP3 capping enzyme, forms an enzyme complex positioned near the channels situated at each of the five-fold vertices of the core. Following infection, the outermost layer of the virus is lost, leaving a double-layered particle (DLP) made up of the core and VP6 shell. VP1 then catalyzes the transcription of fully conservative plus-strand genomic RNAs that are extruded through the DLP's channels into the cytoplasm where they function as mRNAs for translation of viral proteins. One copy of each of the viral (+)RNAs is also recruited during core assembly, together with newly synthesized polymerase complexes and VP2. The polymerase of these novo-formed particles catalyzes the synthesis of complementary minus-strands leading to dsRNA formation. To do so, the polymerase specifically recognizes and binds 4 bases 5'-UGUG-3' in the conserved 3'-sequence of plus-strand RNA templates. VP2 presumably activates the autoinhibited VP1-RNA complex to coordinate packaging and genome replication. Once dsRNA synthesis is complete, the polymerase switches to the transcriptional mode, thus providing secondary transcription. The chain is RNA-directed RNA polymerase from Chlorocebus pygerythrus (Vervet monkey).